A 338-amino-acid chain; its full sequence is MKVFYDKDADLSLIKGKNVTIIGYGSQGHAHALNLKDSGVNVTVGLRKSGASWNKAANAGLQVKEVAEAVKGADVVMILLPDEQIADVYKNEVHDNIKEGAALAFAHGFNVHYGAVIPRADLDVIMIAPKAPGHTVRATYTQGGGVPHLIAVHQNKSGAARDIALSYATANGGGRAGIIETNFREETETDLFGEQAVLCGGTVELIKAGFETLVEAGYAPEMAYFECLHELKLIVDLIYEGGIANMNYSISNNAEYGEYVTGPRVVTEETKKAMKQCLTDIQTGEYAKSFLLENKAGAPTLISRRRLTAEHQIEEVGAKLRAMMPWIAKNKMVDQSKN.

The region spanning 1–181 (MKVFYDKDAD…GGGRAGIIET (181 aa)) is the KARI N-terminal Rossmann domain. NADP(+) is bound by residues 24 to 27 (YGSQ), R47, and S52. The active site involves H107. NADP(+) is bound at residue G133. Positions 182 to 327 (NFREETETDL…AKLRAMMPWI (146 aa)) constitute a KARI C-terminal knotted domain. Mg(2+)-binding residues include D190, E194, E226, and E230. A substrate-binding site is contributed by S251.

Belongs to the ketol-acid reductoisomerase family. The cofactor is Mg(2+).

The enzyme catalyses (2R)-2,3-dihydroxy-3-methylbutanoate + NADP(+) = (2S)-2-acetolactate + NADPH + H(+). It carries out the reaction (2R,3R)-2,3-dihydroxy-3-methylpentanoate + NADP(+) = (S)-2-ethyl-2-hydroxy-3-oxobutanoate + NADPH + H(+). It functions in the pathway amino-acid biosynthesis; L-isoleucine biosynthesis; L-isoleucine from 2-oxobutanoate: step 2/4. It participates in amino-acid biosynthesis; L-valine biosynthesis; L-valine from pyruvate: step 2/4. Involved in the biosynthesis of branched-chain amino acids (BCAA). Catalyzes an alkyl-migration followed by a ketol-acid reduction of (S)-2-acetolactate (S2AL) to yield (R)-2,3-dihydroxy-isovalerate. In the isomerase reaction, S2AL is rearranged via a Mg-dependent methyl migration to produce 3-hydroxy-3-methyl-2-ketobutyrate (HMKB). In the reductase reaction, this 2-ketoacid undergoes a metal-dependent reduction by NADPH to yield (R)-2,3-dihydroxy-isovalerate. The sequence is that of Ketol-acid reductoisomerase (NADP(+)) from Cupriavidus necator (strain ATCC 17699 / DSM 428 / KCTC 22496 / NCIMB 10442 / H16 / Stanier 337) (Ralstonia eutropha).